We begin with the raw amino-acid sequence, 657 residues long: Hemocyanin A chain (657 aa).

A disulfide bridge connects residues cysteine 93 and cysteine 98. Asparagine 167 carries N-linked (GlcNAc...) asparagine glycosylation. Cu cation is bound by residues histidine 194, histidine 198, histidine 224, histidine 344, histidine 348, and histidine 384. 2 disulfides stabilise this stretch: cysteine 483–cysteine 502 and cysteine 562–cysteine 609. The disordered stretch occupies residues glutamate 594–tyrosine 616.

The protein belongs to the tyrosinase family. Hemocyanin subfamily. In terms of assembly, hexamer of a number of different chains, of which A, B, and C have been identified. Hemolymph.

The protein resides in the secreted. It localises to the extracellular space. Hemocyanins are copper-containing oxygen carriers occurring freely dissolved in the hemolymph of many mollusks and arthropods. This is Hemocyanin A chain from Panulirus interruptus (California spiny lobster).